Here is a 138-residue protein sequence, read N- to C-terminus: Translation initiation factor 5A (138 aa).

Position 37 is a hypusine (Lys37).

This sequence belongs to the eIF-5A family.

It is found in the cytoplasm. Its function is as follows. Functions by promoting the formation of the first peptide bond. The polypeptide is Translation initiation factor 5A (eif5a) (Pyrococcus horikoshii (strain ATCC 700860 / DSM 12428 / JCM 9974 / NBRC 100139 / OT-3)).